The following is a 215-amino-acid chain: Cytochrome b6 (215 aa).

Residues Ile32–Phe52 form a helical membrane-spanning segment. Cys35 lines the heme c pocket. His86 and His100 together coordinate heme b. Helical transmembrane passes span Ala90 to Phe110, Leu116 to Tyr136, and Ala186 to Ile206. Residues His187 and His202 each coordinate heme b.

Belongs to the cytochrome b family. PetB subfamily. In terms of assembly, the 4 large subunits of the cytochrome b6-f complex are cytochrome b6, subunit IV (17 kDa polypeptide, PetD), cytochrome f and the Rieske protein, while the 4 small subunits are PetG, PetL, PetM and PetN. The complex functions as a dimer. Heme b is required as a cofactor. Heme c serves as cofactor.

The protein resides in the plastid. Its subcellular location is the chloroplast thylakoid membrane. In terms of biological role, component of the cytochrome b6-f complex, which mediates electron transfer between photosystem II (PSII) and photosystem I (PSI), cyclic electron flow around PSI, and state transitions. The chain is Cytochrome b6 from Emiliania huxleyi (Coccolithophore).